The chain runs to 130 residues: Small ribosomal subunit protein uS8A (130 aa).

The protein belongs to the universal ribosomal protein uS8 family. In terms of assembly, component of the small ribosomal subunit (SSU). Mature yeast ribosomes consist of a small (40S) and a large (60S) subunit. The 40S small subunit contains 1 molecule of ribosomal RNA (18S rRNA) and at least 33 different proteins. The large 60S subunit contains 3 rRNA molecules (25S, 5.8S and 5S rRNA) and at least 46 different proteins.

It is found in the cytoplasm. Its subcellular location is the nucleus. In terms of biological role, component of the ribosome, a large ribonucleoprotein complex responsible for the synthesis of proteins in the cell. The small ribosomal subunit (SSU) binds messenger RNAs (mRNAs) and translates the encoded message by selecting cognate aminoacyl-transfer RNA (tRNA) molecules. The large subunit (LSU) contains the ribosomal catalytic site termed the peptidyl transferase center (PTC), which catalyzes the formation of peptide bonds, thereby polymerizing the amino acids delivered by tRNAs into a polypeptide chain. The nascent polypeptides leave the ribosome through a tunnel in the LSU and interact with protein factors that function in enzymatic processing, targeting, and the membrane insertion of nascent chains at the exit of the ribosomal tunnel. In Schizosaccharomyces pombe (strain 972 / ATCC 24843) (Fission yeast), this protein is Small ribosomal subunit protein uS8A (rps2201).